The chain runs to 378 residues: UPF0754 membrane protein BCAH820_0954 (378 aa).

2 helical membrane passes run 1 to 21 and 357 to 377; these read MNIWLSMLTTTGLGAIIGGFT and YLGALLGGMIGIVQGLLLLFL.

It belongs to the UPF0754 family.

The protein resides in the cell membrane. This is UPF0754 membrane protein BCAH820_0954 from Bacillus cereus (strain AH820).